The sequence spans 254 residues: Probable glucose-1-phosphate cytidylyltransferase (254 aa).

Substrate-binding positions include 6-10 (LCGGK), 11-13 (GTR), Lys-23, Thr-103, Arg-108, and Gly-126. Positions 127 and 232 each coordinate Mg(2+).

This sequence belongs to the glucose-1-phosphate cytidylyltransferase family. Requires Mg(2+) as cofactor.

The enzyme catalyses alpha-D-glucose 1-phosphate + CTP + H(+) = CDP-D-glucose + diphosphate. In terms of biological role, catalyzes the transfer of a CMP moiety from CTP to glucose 1-phosphate. The chain is Probable glucose-1-phosphate cytidylyltransferase (yfnH) from Bacillus subtilis (strain 168).